The sequence spans 1101 residues: Protein unc-13 homolog (1101 aa).

The region spanning 663-804 is the MHD1 domain; sequence VSVFPAADSL…ASKDDLVPPV (142 aa). The 111-residue stretch at 941 to 1051 folds into the MHD2 domain; sequence QSRLEGLIEA…YETRELIDDL (111 aa).

This sequence belongs to the unc-13 family. Expressed in roots, cotyledons, leaves, stems and flowers. Expressed in guard cells and mesophyll cells of leaves.

It is found in the cytoplasm. The protein resides in the cell membrane. Functionally, controls the tethering of the proton ATPase AHA1 to the plasma membrane. Is essential for stomatal opening in response to low concentration of carbon dioxide and light. The sequence is that of Protein unc-13 homolog from Arabidopsis thaliana (Mouse-ear cress).